We begin with the raw amino-acid sequence, 55 residues long: Large ribosomal subunit protein bL33 (55 aa).

The protein belongs to the bacterial ribosomal protein bL33 family.

The protein is Large ribosomal subunit protein bL33 of Roseobacter denitrificans (strain ATCC 33942 / OCh 114) (Erythrobacter sp. (strain OCh 114)).